Consider the following 319-residue polypeptide: Acetyl esterase (319 aa).

Positions 91–93 (HGG) match the Involved in the stabilization of the negatively charged intermediate by the formation of the oxyanion hole motif. Active-site residues include Ser165, Asp262, and His292.

Belongs to the 'GDXG' lipolytic enzyme family. In terms of assembly, homodimer. Interacts with MalT and MelA.

It localises to the cytoplasm. In terms of biological role, displays esterase activity towards short chain fatty esters (acyl chain length of up to 8 carbons). Able to hydrolyze triacetylglycerol (triacetin) and tributyrylglycerol (tributyrin), but not trioleylglycerol (triolein) or cholesterol oleate. Negatively regulates MalT activity by antagonizing maltotriose binding. Inhibits MelA galactosidase activity. The sequence is that of Acetyl esterase from Escherichia coli (strain ATCC 8739 / DSM 1576 / NBRC 3972 / NCIMB 8545 / WDCM 00012 / Crooks).